The primary structure comprises 163 residues: MPSFDIVSEITLHEVRNAVENANRDLTNRWDFRNVQAAIELNEKNESIKVSSESDFQVEQLVDILRNACIKRGIDSGSLDIPTEYEHSGKTYSKEIKLKQGIASEMAKKITKLIKDSKLKVQTQIQGEQVRVTGKSRDDLQAVIQLVKGAELGQPFQFNNFRD.

This sequence belongs to the YajQ family.

Nucleotide-binding protein. This chain is Nucleotide-binding protein PM1656, found in Pasteurella multocida (strain Pm70).